A 500-amino-acid polypeptide reads, in one-letter code: MVLLIGDGLWSGVIFTALFLLLVDLMHRRKFWRARYPPGPMPLPGLGNLLQVDFENMPYSLYKFQQRYGDVFSLQMAWKPVVVINGLKAVREVLVNCGEDTADRPPVPIFNHLGYRPKSQGVVFARYGPQWREQRRFSVSTMRDFGVGKKSLEQWVTEEAGHLCDAFTQEAGHPFNPITLLNKSVCNVISSLIYAHRFDYEDPFFNKLLKTLQESFGEDSGFIAEVLNAVPVLLRIPGLPGKAFPKLTAFMDSLYKMLIEHKTTWDPAQPPRGLTDAFLAEVEKAKGRPESSFNDENLHVVVADLFIAGMVTTSTTLSWALLLMILHPDVQSRVQQEIDDVIGQVRRPEMADQARMPYTNAVIHEVQRFGDIAPVNVPHMTSRDVEVQGFLIPKGTTLIPNLSSVLKDETVWEKPLHFHPEHFLDAQGRFVKQEAFMPFSAGRRACLGEPLARMELFLFFTCLLQRFSFSVPAGQPRPSDQGVFALPVTPTPYELCAVVR.

A heme-binding site is contributed by cysteine 446.

The protein belongs to the cytochrome P450 family. It depends on heme as a cofactor.

The protein localises to the endoplasmic reticulum membrane. The protein resides in the microsome membrane. The sequence is that of Cytochrome P450 2D20 (CYP2D20) from Mesocricetus auratus (Golden hamster).